We begin with the raw amino-acid sequence, 576 residues long: Arginine--tRNA ligase (576 aa).

Positions 126-136 (ANPTGPMHIGH) match the 'HIGH' region motif.

The protein belongs to the class-I aminoacyl-tRNA synthetase family. In terms of assembly, monomer.

The protein localises to the cytoplasm. The catalysed reaction is tRNA(Arg) + L-arginine + ATP = L-arginyl-tRNA(Arg) + AMP + diphosphate. This is Arginine--tRNA ligase from Rickettsia peacockii (strain Rustic).